Here is a 518-residue protein sequence, read N- to C-terminus: MEIKTRRDTSETSVRKDDEEEVEEEQPLSPAARVFHAPEFNCYVISVIGIKKKIDPDVIIEGLKQTLIRHPRFSSKMVSTSVGNKKRQTQSWVRTNVVVTDHVIVSDIQTQNIENGNADAFLETYVSNLTTVPLDISKPLWQLHLLDLKTSDAENVAVLKFHHSLGDGMSLMALVLACMRKTSNPDELPSLPNQNRSSSRSSRLMAGSRGDSRFLWLVMVIWSAIMLVLNTVCDALEFIATTMFLKDTETPIKGDFRFSKSKRMCLVHRTVSLDDIKLIKNTMKMTVNDVVLGVSQAGLSQYLDRRYGEKKKKVGEDQDSKRKATDMPKRIRLRSALLVNLRPNTGIQDLADMMAKGSTCRWGNWIGYIVFPFSIGLRDDPLQHLRRAKRIIDRKKNSLEAALTFVAGKFILKTFGVQVAAKIINRALSNTTMSFSNLIGPIEEISFYGHPITYMAPSVYGHPHALTMHFQSYMNQMTISLTVDPTVISDPHRLLDDWEKSLQSIKAAVQERDSRSLD.

Basic and acidic residues predominate over residues 1–17 (MEIKTRRDTSETSVRKD). Positions 1-29 (MEIKTRRDTSETSVRKDDEEEVEEEQPLS) are disordered. At 1-213 (MEIKTRRDTS…LMAGSRGDSR (213 aa)) the chain is on the cytoplasmic side. Residue His-163 is the Proton acceptor of the active site. Positions 185-205 (PDELPSLPNQNRSSSRSSRLM) are disordered. Residues 214–234 (FLWLVMVIWSAIMLVLNTVCD) traverse the membrane as a helical segment. The Lumenal segment spans residues 235–518 (ALEFIATTMF…VQERDSRSLD (284 aa)). A glycan (N-linked (GlcNAc...) asparagine) is linked at Asn-430.

This sequence in the N-terminal section; belongs to the long-chain O-acyltransferase family. As to expression, expressed in roots, stems, leaves, flowers and siliques.

The protein resides in the cell membrane. Its subcellular location is the endoplasmic reticulum membrane. It is found in the golgi apparatus membrane. It carries out the reaction an acyl-CoA + a 1,2-diacyl-sn-glycerol = a triacyl-sn-glycerol + CoA. The catalysed reaction is a long chain fatty alcohol + a fatty acyl-CoA = a wax ester + CoA. It functions in the pathway glycerolipid metabolism; triacylglycerol biosynthesis. The protein operates within lipid metabolism. Its function is as follows. Bifunctional wax ester synthase/diacylglycerol acyltransferase that uses acyl-CoAs with 16, 18 and 20 carbons as substrates, preferably in combination with 16:0ol alcohol. Involved in cuticular wax biosynthesis. This is Wax ester synthase/diacylglycerol acyltransferase 6 from Arabidopsis thaliana (Mouse-ear cress).